We begin with the raw amino-acid sequence, 871 residues long: DNA mismatch repair protein MutS (871 aa).

ATP is bound at residue 621 to 628; that stretch reads GPNMAGKS.

This sequence belongs to the DNA mismatch repair MutS family.

Functionally, this protein is involved in the repair of mismatches in DNA. It is possible that it carries out the mismatch recognition step. This protein has a weak ATPase activity. In Geobacter sulfurreducens (strain ATCC 51573 / DSM 12127 / PCA), this protein is DNA mismatch repair protein MutS.